Here is a 146-residue protein sequence, read N- to C-terminus: 3-hydroxyacyl-[acyl-carrier-protein] dehydratase FabZ (146 aa).

His49 is an active-site residue.

This sequence belongs to the thioester dehydratase family. FabZ subfamily.

The protein resides in the cytoplasm. It catalyses the reaction a (3R)-hydroxyacyl-[ACP] = a (2E)-enoyl-[ACP] + H2O. Its function is as follows. Involved in unsaturated fatty acids biosynthesis. Catalyzes the dehydration of short chain beta-hydroxyacyl-ACPs and long chain saturated and unsaturated beta-hydroxyacyl-ACPs. The protein is 3-hydroxyacyl-[acyl-carrier-protein] dehydratase FabZ of Wolbachia sp. subsp. Brugia malayi (strain TRS).